Here is a 185-residue protein sequence, read N- to C-terminus: Elongation factor P (185 aa).

It belongs to the elongation factor P family.

It localises to the cytoplasm. Its pathway is protein biosynthesis; polypeptide chain elongation. Functionally, involved in peptide bond synthesis. Stimulates efficient translation and peptide-bond synthesis on native or reconstituted 70S ribosomes in vitro. Probably functions indirectly by altering the affinity of the ribosome for aminoacyl-tRNA, thus increasing their reactivity as acceptors for peptidyl transferase. The polypeptide is Elongation factor P (Pseudothermotoga lettingae (strain ATCC BAA-301 / DSM 14385 / NBRC 107922 / TMO) (Thermotoga lettingae)).